Reading from the N-terminus, the 137-residue chain is S-protein homolog 16 (137 aa).

Residues 1-21 form the signal peptide; that stretch reads MKNLLVFIFVFSLCMFDHVSG. N-linked (GlcNAc...) asparagine glycosylation occurs at Asn87.

It belongs to the plant self-incompatibility (S1) protein family.

The protein resides in the secreted. The sequence is that of S-protein homolog 16 from Arabidopsis thaliana (Mouse-ear cress).